Reading from the N-terminus, the 1663-residue chain is Complement C3 (1663 aa).

The first 22 residues, 1 to 22 (MGPTSGPSLLLLLLTHLPLALG), serve as a signal peptide directing secretion. Phosphoserine; by FAM20C is present on residues Ser-38 and Ser-70. N-linked (GlcNAc...) asparagine glycosylation is present at Asn-85. Phosphoserine; by FAM20C is present on residues Ser-297 and Ser-303. 13 cysteine pairs are disulfide-bonded: Cys-559–Cys-816, Cys-627–Cys-662, Cys-693–Cys-720, Cys-694–Cys-727, Cys-707–Cys-728, Cys-873–Cys-1513, Cys-1101–Cys-1158, Cys-1358–Cys-1489, Cys-1389–Cys-1458, Cys-1506–Cys-1511, Cys-1518–Cys-1590, Cys-1537–Cys-1661, and Cys-1637–Cys-1646. A Phosphoserine; by FAM20C modification is found at Ser-672. Residues 693-728 (CCEDGMRENPMRFSCQRRTRFISLGEACKKVFLDCC) enclose the Anaphylatoxin-like domain. An N-linked (GlcNAc...) asparagine glycan is attached at Asn-939. A disordered region spans residues 954-973 (REGVQKEDIPPADLSDQVPD). Phosphoserine; by FAM20C is present on Ser-968. The isoglutamyl cysteine thioester (Cys-Gln) cross-link spans 1010-1013 (CGEQ). Ser-1321 carries the post-translational modification Phosphoserine; by FAM20C. The NTR domain occupies 1518–1661 (CFIQKSDDKV…FTESMVVFGC (144 aa)). Ser-1573 bears the Phosphoserine; by FAM20C mark. N-linked (GlcNAc...) asparagine glycosylation occurs at Asn-1617. The interaction with CFP/properdin stretch occupies residues 1634–1659 (EDECQDEENQKQCQDLGAFTESMVVF).

As to quaternary structure, in absence of complement activation, the C3 precursor is first processed by the removal of 4 Arg residues, forming two chains, beta and alpha, linked by a disulfide bond. In terms of assembly, complement C3b is composed of complement C3b and complement C3 beta chains that are associated via disulfide bonds. Non-enzymatic component of the C5 convertase, also named C4bC2bC3b, composed of the serine protease complement C2b (C2), complement C3b, as well as complement C4b (C4). Non-enzymatic component of the C5 convertase of the alternative complement pathways composed of the serine protease complement CFB and complement C3b. Interacts with CFP; interaction takes place together with CFB in the alternative complement system and allows the complex to become active. Interacts with CR1 (via Sushi 8 and Sushi 9 domains). Interacts with CFH. Interacts with CFH. Interacts with CR2. As to quaternary structure, during pregnancy, C3dg exists as a complex (probably a 2:2:2 heterohexamer) with AGT and the proform of PRG2. Interacts with CR2 (via the N-terminal Sushi domains 1 and 2). In terms of assembly, (Microbial infection) C3b interacts with herpes simplex virus 1 (HHV-1) and herpes simplex virus 2 (HHV-2) envelope glycoprotein C; this interaction inhibits the activation of the complement system. (Microbial infection) Interacts with Staphylococcus aureus immunoglobulin-binding protein Sbi; this interaction prevents the association between C3dg and CR2. As to quaternary structure, (Microbial infection) Interacts with Staphylococcus aureus protein Fib. C3 precursor is first processed by the removal of 4 Arg residues, forming two chains, beta and alpha, linked by a disulfide bond. During activation of the complement systems, the alpha chain is cleaved into C3a and C3b by the C3 convertase: C3b stays linked to the beta chain, while C3a is released in the plasma. The alpha chain is cleaved by the serine protease complement C2b component of the C3 convertase to generate C3a and C3b following activation by the classical, lectin and GZMK complement systems. The alpha chain is cleaved by CFB component of the C3 convertase to generate C3a and C3b following activation by the alternative complement system. Post-translationally, C3a is further processed by carboxypeptidases to release the C-terminal arginine residue generating the acylation stimulating protein (ASP). Levels of ASP are increased in adipocytes in the postprandial period and by insulin and dietary chylomicrons. In terms of processing, complement C3b is rapidly split in two positions by factor I (CFI) and a cofactor (CFH) to form iC3b (inactivated C3b) and C3f which is released. CFI and CFH catalyze proteolytic degradation of already-deposited complement C3b. Then iC3b is slowly cleaved (possibly by CFI) to form C3c (beta chain + alpha' chain fragment 1 + alpha' chain fragment 2), C3dg and C3f. Other proteases produce other fragments such as C3d or C3g. Upon activation, the internal thioester bond reacts with carbohydrate antigens on the target surface to form amide or ester bonds, leading to covalent association with the surface of pathogens. Post-translationally, complement C3b interacts with complement C4b via a thioester linkage. In terms of processing, phosphorylated by FAM20C in the extracellular medium. (Microbial infection) C3 is cleaved by Staphylococcus aureus aureolysin; this cleavage renders C3a and C3b inactive. C3b is rapidly degraded by host factors CFH and CFI preventing its deposition on the bacterial surface while C3a is further inactivated by aureolysin. Post-translationally, (Microbial infection) Complement C3 beta chain is cleaved and inactivated by S.pyogenes SpeB. In terms of processing, (Microbial infection) Cleaved by N.meningitidis NalP between Leu-744 and Gly-745, generating a slightly shorter C3 alpha form and a slightly longer C3 beta form. The C3b-like fragment is degraded in the presence of the complement regulators CFH and CFI, preventing its deposition on the bacterial surface. Plasma. In terms of tissue distribution, produced in adipocytes and released into the plasma during both the fasting and postprandial periods.

The protein localises to the secreted. It is found in the cell surface. With respect to regulation, complement activation is inhibited by VSIG4. Functionally, precursor of non-enzymatic components of the classical, alternative, lectin and GZMK complement pathways, which consist in a cascade of proteins that leads to phagocytosis and breakdown of pathogens and signaling that strengthens the adaptive immune system. Its function is as follows. Non-enzymatic component of C5 convertase. Generated following cleavage by C3 convertase, it covalently attaches to the surface of pathogens, where it acts as an opsonin that marks the surface of antigens for removal. Complement C3b binds covalently via its reactive thioester, to cell surface carbohydrates or immune aggregates. Together with complement C4b, it then recruits the serine protease complement C2b to form the C5 convertase, which cleaves and activate C5, the next component of the complement pathways. In the alternative complement pathway, recruits the serine protease CFB to form the C5 convertase that cleaves and activates C5. In terms of biological role, mediator of local inflammatory process released following cleavage by C3 convertase. Acts by binding to its receptor, C3AR1, activating G protein-coupled receptor signaling, promoting the phosphorylation, ARRB2-mediated internalization and endocytosis of C3AR1. C3a anaphylatoxin stimulates the activation of immune cells such as mast cells and basophilic leukocytes to release inflammation agents, such as cytokines, chemokines and histamine, which promote inflammation development. Also acts as potent chemoattractant for the migration of macrophages and neutrophils to the inflamed tissues, resulting in neutralization of the inflammatory triggers by multiple ways, such as phagocytosis and generation of reactive oxidants. Adipogenic hormone that stimulates triglyceride synthesis and glucose transport in adipocytes, regulating fat storage and playing a role in postprandial triglyceride clearance. Appears to stimulate triglyceride synthesis via activation of the PLC, MAPK and AKT signaling pathways. Acts by binding to its receptor, C5AR2, activating G protein-coupled receptor signaling, promoting the phosphorylation, ARRB2-mediated internalization and endocytosis of C5AR2. Functionally, acts as a chemoattractant for neutrophils in chronic inflammation. This is Complement C3 from Homo sapiens (Human).